The primary structure comprises 623 residues: Membrane protein insertase YidC (623 aa).

5 helical membrane passes run 8–28, 379–399, 449–469, 507–527, and 543–563; these read LILA…LFPP, MGLA…PLAY, LPIL…FVTI, TTMA…SMWL, and IFAW…SGLV. A compositionally biased stretch (low complexity) spans 601–617; the sequence is KPAAQPAGKAANDGAAP. The tract at residues 601-623 is disordered; that stretch reads KPAAQPAGKAANDGAAPAKKRKP.

It belongs to the OXA1/ALB3/YidC family. Type 1 subfamily. As to quaternary structure, interacts with the Sec translocase complex via SecD. Specifically interacts with transmembrane segments of nascent integral membrane proteins during membrane integration.

The protein localises to the cell inner membrane. Functionally, required for the insertion and/or proper folding and/or complex formation of integral membrane proteins into the membrane. Involved in integration of membrane proteins that insert both dependently and independently of the Sec translocase complex, as well as at least some lipoproteins. Aids folding of multispanning membrane proteins. The chain is Membrane protein insertase YidC from Cereibacter sphaeroides (strain ATCC 17029 / ATH 2.4.9) (Rhodobacter sphaeroides).